A 181-amino-acid chain; its full sequence is Probable cobalt-precorrin-6B C(15)-methyltransferase (decarboxylating) (181 aa).

S-adenosyl-L-methionine-binding positions include Thr-16, Gly-40–Gly-44, Asp-61, and Ala-89.

Belongs to the methyltransferase superfamily. Archaeal-type CbiT family.

The enzyme catalyses Co-precorrin-6B + S-adenosyl-L-methionine = Co-precorrin-7 + S-adenosyl-L-homocysteine + CO2. The protein operates within cofactor biosynthesis; adenosylcobalamin biosynthesis; cob(II)yrinate a,c-diamide from sirohydrochlorin (anaerobic route): step 8/10. Its function is as follows. Catalyzes the methylation of C-15 in cobalt-precorrin-6B followed by the decarboxylation of C-12 to form cobalt-precorrin-7. The protein is Probable cobalt-precorrin-6B C(15)-methyltransferase (decarboxylating) of Methanococcus maripaludis (strain C5 / ATCC BAA-1333).